A 285-amino-acid polypeptide reads, in one-letter code: Protein HtrL (285 aa).

In Escherichia coli (strain K12), this protein is Protein HtrL.